The chain runs to 178 residues: S-alkylcysteine N-acetyltransferase (178 aa).

In terms of domain architecture, N-acetyltransferase spans 4–163; that stretch reads DIFRLATVED…IGVMMHKVLI (160 aa).

The protein belongs to the acetyltransferase family.

It catalyses the reaction an S-substituted L-cysteine + acetyl-CoA = an N-acetyl-L-cysteine-S-conjugate + CoA + H(+). It carries out the reaction S-benzyl-L-cysteine + acetyl-CoA = N-acetyl-S-benzyl-L-cysteine + CoA + H(+). The enzyme catalyses S-methyl-L-cysteine + acetyl-CoA = N-acetyl-S-methyl-L-cysteine + CoA + H(+). The protein operates within amino-acid metabolism. Involved in a cysteine salvage pathway from S-alkylcysteine. Catalyzes the first step in this pathway, i.e. the amine acetylation of an S-alkylcysteine with a preference for S-benzyl-L-cysteine over S-methyl-L-cysteine. This pathway is likely important in the catabolism of alkylated cysteine generated by proteolysis of alkylated glutathione formed in the detoxification of a wide range of electrophiles. This Bacillus subtilis (strain 168) protein is S-alkylcysteine N-acetyltransferase.